The chain runs to 1322 residues: WD repeat-containing protein 17 (1322 aa).

WD repeat units lie at residues 81–121, 123–164, 171–211, 221–261, and 266–307; these read EHKK…VIAK, DSTK…SGVI, SFLS…QKHV, DEED…CITT, and SAAA…PIDN. A disordered region spans residues 328-352; it reads KFSVQSPTKNHYTSSTSEAVPPPTL. Positions 330–345 are enriched in polar residues; it reads SVQSPTKNHYTSSTSE. WD repeat units follow at residues 391 to 431, 434 to 474, 478 to 518, 519 to 559, 564 to 604, 607 to 647, and 650 to 690; these read GHVE…AVYT, GNEG…IIQR, HGTN…LHKY, KHPA…DQPL, GHTA…CINI, GHTA…CVDT, and DHGA…TPVQ.

In Homo sapiens (Human), this protein is WD repeat-containing protein 17 (WDR17).